Reading from the N-terminus, the 282-residue chain is Gap junction Cx32.7 protein (282 aa).

At 2-13 (GEWDLLGRLLDK) the chain is on the cytoplasmic side. A helical membrane pass occupies residues 14–36 (VQSHSTVIGKVWLTVLFVFRILV). At 37 to 76 (LRTGADRVWGDEQSDFVCNTQQPGCENVCYDLAFPISHVR) the chain is on the extracellular side. The chain crosses the membrane as a helical span at residues 77–99 (FWFLQIIAVATPKLLYLGHVLHV). The Cytoplasmic segment spans residues 100–148 (IHAEKKMKERMKKQAELDDQTNLFLRKAYKVPKYTKSSGKISIRGRLLR). The chain crosses the membrane as a helical span at residues 149–171 (SYVYHLVAKIILEVLFIVGQYFL). The Extracellular segment spans residues 172-203 (YGFTLDTRYVCTRFPCPHKVDCFLSRPTEKSV). A helical membrane pass occupies residues 204-226 (IIWFMLVAAFVSLFLSLVELFYL). The Cytoplasmic segment spans residues 227 to 282 (CVKAAKECMARRQDYTVTPVTPPLLARKSFKSHKEVFQNCVNEPASPENNMEEVHI).

Belongs to the connexin family. Alpha-type (group II) subfamily. A connexon is composed of a hexamer of connexins. As to expression, expressed equally in incompetent and competent ovaries.

The protein localises to the cell membrane. It is found in the cell junction. The protein resides in the gap junction. In terms of biological role, one gap junction consists of a cluster of closely packed pairs of transmembrane channels, the connexons, through which materials of low MW diffuse from one cell to a neighboring cell. This chain is Gap junction Cx32.7 protein, found in Micropogonias undulatus (Atlantic croaker).